Consider the following 526-residue polypeptide: Glucose-6-phosphate 1-dehydrogenase (526 aa).

NADP(+)-binding positions include 50 to 57 (GASGDLAK), Arg-84, and Lys-184. D-glucose 6-phosphate is bound by residues Lys-184, 214–218 (HYLGK), Glu-252, and Asp-271. The active-site Proton acceptor is His-276. Arg-370 contacts NADP(+). D-glucose 6-phosphate-binding residues include Lys-373 and Arg-378. NADP(+) contacts are provided by Lys-379, Arg-383, and Arg-406. Gln-408 is a binding site for D-glucose 6-phosphate. NADP(+) is bound by residues 414–416 (YFK), 434–436 (DLT), Arg-500, Tyr-516, and Trp-522.

It belongs to the glucose-6-phosphate dehydrogenase family.

The protein resides in the cytoplasm. It is found in the cytosol. The enzyme catalyses D-glucose 6-phosphate + NADP(+) = 6-phospho-D-glucono-1,5-lactone + NADPH + H(+). Its pathway is carbohydrate degradation; pentose phosphate pathway; D-ribulose 5-phosphate from D-glucose 6-phosphate (oxidative stage): step 1/3. Cytosolic glucose-6-phosphate dehydrogenase that catalyzes the first and rate-limiting step of the oxidative branch within the pentose phosphate pathway/shunt, an alternative route to glycolysis for the dissimilation of carbohydrates and a major source of reducing power and metabolic intermediates for fatty acid and nucleic acid biosynthetic processes. The protein is Glucose-6-phosphate 1-dehydrogenase (ZW) of Ceratitis capitata (Mediterranean fruit fly).